Here is a 385-residue protein sequence, read N- to C-terminus: Deoxyhypusine synthase (385 aa).

NAD(+) contacts are provided by residues 108–112, 134–136, glutamate 140, and aspartate 257; these read SNLIS and TAG. Residue 139-140 participates in spermidine binding; the sequence is EE. Spermidine is bound at residue aspartate 262. Glycine 304 provides a ligand contact to NAD(+). Residue histidine 309 coordinates spermidine. Residue 329–330 coordinates NAD(+); it reads TG. Spermidine contacts are provided by residues 335 to 337 and 344 to 350; these read GSD and EAVSWGK. The Nucleophile role is filled by lysine 350. 363-364 contributes to the NAD(+) binding site; sequence DV.

This sequence belongs to the deoxyhypusine synthase family. NAD(+) serves as cofactor.

The catalysed reaction is [eIF5A protein]-L-lysine + spermidine = [eIF5A protein]-deoxyhypusine + propane-1,3-diamine. The protein operates within protein modification; eIF5A hypusination. Its function is as follows. Catalyzes the NAD-dependent oxidative cleavage of spermidine and the subsequent transfer of the butylamine moiety of spermidine to the epsilon-amino group of a specific lysine residue of the eIF-5A precursor protein to form the intermediate deoxyhypusine residue. In Candida glabrata (strain ATCC 2001 / BCRC 20586 / JCM 3761 / NBRC 0622 / NRRL Y-65 / CBS 138) (Yeast), this protein is Deoxyhypusine synthase (DYS1).